Here is a 529-residue protein sequence, read N- to C-terminus: Listeriolysin O (529 aa).

Residues 1 to 24 form the signal peptide; sequence MKKIMLVFITLILISLPIAQQTEA. A disordered region spans residues 35-54; it reads SISSMAPPASPPASPKTPIE. 4 consecutive transmembrane segments (beta stranded) span residues 214–227, 234–243, 312–321, and 329–341; these read ESQLIAKFGTAFKA, VNFGAISEGK, STKVKAAFDA, and SGDVELTNIIKNS. Residues 483–493 carry the Conserved undecapeptide motif; that stretch reads ECTGLAWEWWR. Residues 515 to 516 carry the Cholesterol binding motif; that stretch reads TL.

It belongs to the cholesterol-dependent cytolysin family. Homooligomeric pore complex of 35 to 50 subunits; when inserted in the host membrane.

Its subcellular location is the secreted. The protein localises to the host membrane. It localises to the host cell membrane. With respect to regulation, activity of listeriolysin O is regulated on multiple levels. It should be high in the phagosome, thereby allowing escape of the bacteria from the phagosomal compartment. Then, once inside the host cytosol, the activity must be controlled to prevent lysis of the host plasma membrane and loss of the intracellular environment. Its function is as follows. A cholesterol-dependent toxin that causes cytolysis by forming pores in cholesterol containing host membranes. After binding to target membranes, the protein undergoes a major conformation change, leading to its insertion in the host membrane and formation of an oligomeric pore complex. Cholesterol is required for binding to host membranes, membrane insertion and pore formation; cholesterol binding is mediated by a Thr-Leu pair in the C-terminus. Acts as a major virulence factor required for the escape of bacteria from phagosomal vacuoles and entry into the host cytosol. Can be reversibly inactivated by oxidation. The sequence is that of Listeriolysin O (hly) from Listeria monocytogenes serotype 4a (strain HCC23).